The primary structure comprises 153 residues: MAL-like protein (153 aa).

Transmembrane regions (helical) follow at residues 22 to 42 (LFLT…FLVW), 59 to 79 (VMYV…SYLF), 97 to 117 (GTTG…TIVS), and 131 to 151 (AASF…FSIY). Residues 22–153 (LFLTIPFAFF…ILHAFSIYYH (132 aa)) form the MARVEL domain.

The protein belongs to the MAL family.

The protein localises to the membrane. This chain is MAL-like protein (MALL), found in Homo sapiens (Human).